Reading from the N-terminus, the 125-residue chain is UPF0251 protein DSY3441 (125 aa).

This sequence belongs to the UPF0251 family.

In Desulfitobacterium hafniense (strain Y51), this protein is UPF0251 protein DSY3441.